We begin with the raw amino-acid sequence, 113 residues long: Cell cycle protein GpsB (113 aa).

Positions K37–K63 form a coiled coil. The tract at residues T61–A82 is disordered.

Belongs to the GpsB family. As to quaternary structure, forms polymers through the coiled coil domains. Interacts with PBP1, MreC and EzrA.

The protein resides in the cytoplasm. In terms of biological role, divisome component that associates with the complex late in its assembly, after the Z-ring is formed, and is dependent on DivIC and PBP2B for its recruitment to the divisome. Together with EzrA, is a key component of the system that regulates PBP1 localization during cell cycle progression. Its main role could be the removal of PBP1 from the cell pole after pole maturation is completed. Also contributes to the recruitment of PBP1 to the division complex. Not essential for septum formation. The chain is Cell cycle protein GpsB from Streptococcus pneumoniae (strain ATCC 700669 / Spain 23F-1).